Reading from the N-terminus, the 135-residue chain is HTH-type transcriptional repressor RghR (135 aa).

The HTH cro/C1-type domain occupies 8 to 63 (LRALREERKLTVNQLATYSGVSAAGISRIENGKRGVPKPATIKKLAEALKIPYEGL). Positions 19–38 (VNQLATYSGVSAAGISRIEN) form a DNA-binding region, H-T-H motif.

Its function is as follows. Represses the expression of yvaM and both rapG and rapH. Binds directly to the promoter regions of yvaM, rapG and rapH. In Bacillus subtilis (strain 168), this protein is HTH-type transcriptional repressor RghR (rghR).